We begin with the raw amino-acid sequence, 227 residues long: tRNA pseudouridine synthase B (227 aa).

The active-site Nucleophile is aspartate 42.

This sequence belongs to the pseudouridine synthase TruB family. Type 1 subfamily.

The catalysed reaction is uridine(55) in tRNA = pseudouridine(55) in tRNA. In terms of biological role, responsible for synthesis of pseudouridine from uracil-55 in the psi GC loop of transfer RNAs. This Ureaplasma parvum serovar 3 (strain ATCC 27815 / 27 / NCTC 11736) protein is tRNA pseudouridine synthase B.